The chain runs to 92 residues: Phosphoribosyl-ATP pyrophosphatase (92 aa).

This sequence belongs to the PRA-PH family.

The protein localises to the cytoplasm. It carries out the reaction 1-(5-phospho-beta-D-ribosyl)-ATP + H2O = 1-(5-phospho-beta-D-ribosyl)-5'-AMP + diphosphate + H(+). Its pathway is amino-acid biosynthesis; L-histidine biosynthesis; L-histidine from 5-phospho-alpha-D-ribose 1-diphosphate: step 2/9. In Leptospira interrogans serogroup Icterohaemorrhagiae serovar copenhageni (strain Fiocruz L1-130), this protein is Phosphoribosyl-ATP pyrophosphatase.